The sequence spans 394 residues: Thioredoxin-interacting protein (394 aa).

K212 participates in a covalent cross-link: Glycyl lysine isopeptide (Lys-Gly) (interchain with G-Cter in ubiquitin). S361 carries the post-translational modification Phosphoserine.

Belongs to the arrestin family. As to quaternary structure, homodimer; disulfide-linked. Interacts with TXN/thioredoxin through its redox-active site. Interacts with transcriptional repressors ZBTB16, ZBTB32 and HDAC1. Interacts with DDIT4. Post-translationally, ubiquitinated; undergoes heterotypic 'Lys-48'-/'Lys-63'-branched polyubiquitination catalyzed by ITCH and UBR5 resulting in proteasomal degradation. Deubiquitinated by USP5, leading to TXNIP stabilization.

Its subcellular location is the cytoplasm. Its function is as follows. May act as an oxidative stress mediator by inhibiting thioredoxin activity or by limiting its bioavailability. Interacts with COPS5 and restores COPS5-induced suppression of CDKN1B stability, blocking the COPS5-mediated translocation of CDKN1B from the nucleus to the cytoplasm. Functions as a transcriptional repressor, possibly by acting as a bridge molecule between transcription factors and corepressor complexes, and over-expression will induce G0/G1 cell cycle arrest. Required for the maturation of natural killer cells. Acts as a suppressor of tumor cell growth. Inhibits the proteasomal degradation of DDIT4, and thereby contributes to the inhibition of the mammalian target of rapamycin complex 1 (mTORC1). The sequence is that of Thioredoxin-interacting protein (Txnip) from Rattus norvegicus (Rat).